The chain runs to 270 residues: UPF0246 protein Psyc_0554 (270 aa).

Belongs to the UPF0246 family.

In Psychrobacter arcticus (strain DSM 17307 / VKM B-2377 / 273-4), this protein is UPF0246 protein Psyc_0554.